Consider the following 916-residue polypeptide: Calcium homeostasis endoplasmic reticulum protein (916 aa).

Methionine 1 carries the N-acetylmethionine modification. An SURP motif repeat occupies 15 to 57 (VIDKLAQFVARNGPEFEKMTMEKQKDNPKFSFLFGGEFYSYYK). Lysine 18 is subject to N6-acetyllysine. Residues 149–289 (ETQLDMNEFD…QLQSPALGLG (141 aa)) enclose the CID domain. 2 disordered regions span residues 336-549 (QQQQ…RFPP) and 601-635 (HPPW…PHIN). The span at 354 to 374 (TPPPPAPPPAPAPAPAIPPTT) shows a compositional bias: pro residues. Polar residues predominate over residues 480–501 (WNNQPDAAWNSQFEGPWNSQHE). The span at 525–541 (PFPPHQQHPQFNQPPHP) shows a compositional bias: pro residues. Tyrosine 714 is modified (phosphotyrosine). The disordered stretch occupies residues 722–878 (RARRRKGQEK…DPIKGGDVRD (157 aa)). Basic residues predominate over residues 739–749 (SRSRSKSRGRS). Residues 750–766 (SSRSNSRSSKSSGSYSR) are compositionally biased toward low complexity. Positions 767-815 (SRSRSCSRSYSRSRSRSRSRSRSSRSRSRSQSRSRSKSYSPGRRRRSRS) are enriched in basic residues. A phosphoserine mark is found at serine 813, serine 815, and serine 817. Position 819 is a phosphothreonine (threonine 819). Serine 828 carries the post-translational modification Phosphoserine. Positions 841–891 (EENKGHQMLVKMGWSGSGGLGAKEQGIQDPIKGGDVRDKWDQYKGVGVALD) constitute a G-patch domain. Residue lysine 844 forms a Glycyl lysine isopeptide (Lys-Gly) (interchain with G-Cter in SUMO2) linkage. Phosphoserine is present on residues serine 855 and serine 857. A Glycyl lysine isopeptide (Lys-Gly) (interchain with G-Cter in SUMO2) cross-link involves residue lysine 872. Lysine 879 carries the post-translational modification N6-acetyllysine. Serine 904 is subject to Phosphoserine.

In terms of tissue distribution, expressed in brain, placenta, lung, liver, kidney, pancreas, cardiac and skeletal muscle, and in cultured HEL and Dami cells.

Its subcellular location is the cytoplasm. It is found in the perinuclear region. The protein localises to the endoplasmic reticulum. Involved in calcium homeostasis, growth and proliferation. The sequence is that of Calcium homeostasis endoplasmic reticulum protein from Homo sapiens (Human).